The primary structure comprises 577 residues: Moesin (577 aa).

Residues 2–295 enclose the FERM domain; the sequence is PKTINVRVTT…GNHELYMRRR (294 aa). Serine 74 carries the post-translational modification Phosphoserine. Position 79 is an N6-acetyllysine (lysine 79). At lysine 83 the chain carries N6-succinyllysine. A [IL]-x-C-x-x-[DE] motif motif is present at residues 115 to 120; sequence IYCPPE. Tyrosine 116 is subject to Phosphotyrosine. Position 117 is an S-nitrosocysteine (cysteine 117). 2 positions are modified to N6-acetyllysine: lysine 139 and lysine 165. Basic and acidic residues predominate over residues 376–414; sequence EQERKRAQSEAEKLAKERQEAEEAKEALLKASRDQKKTQ. Disordered regions lie at residues 376-415 and 434-518; these read EQER…KTQE and ARQK…NERV. At serine 407 the chain carries Phosphoserine. Acidic residues predominate over residues 476–487; the sequence is AENDQDEQDENG. A compositionally biased stretch (basic and acidic residues) spans 492–518; it reads ADLRADAMAKDRSEEERTTEAEKNERV. At serine 527 the chain carries Phosphoserine. A Phosphothreonine; by ROCK2 and STK10 modification is found at threonine 558.

Binds NHERF1. In resting T-cells, part of a PAG1-NHERF1-MSN complex which is disrupted upon TCR activation. Interacts with PPP1R16B. Interacts with PDZD8. Interacts with SELPLG and SYK; mediates the activation of SYK by SELPLG. Interacts with PDPN (via cytoplasmic domain); activates RHOA and promotes epithelial-mesenchymal transition. Interacts with SPN/CD43 cytoplasmic tail, CD44 and ICAM2. In terms of processing, phosphorylation on Thr-558 is crucial for the formation of microvilli-like structures. Phosphorylation by ROCK2 suppresses the head-to-tail association of the N-terminal and C-terminal halves resulting in an opened conformation which is capable of actin and membrane-binding. Phosphorylation on Thr-558 by STK10 negatively regulates lymphocyte migration and polarization. Post-translationally, S-nitrosylation of Cys-117 is induced by interferon-gamma and oxidatively-modified low-densitity lipoprotein (LDL(ox)) implicating the iNOS-S100A8/9 transnitrosylase complex.

It localises to the cell membrane. Its subcellular location is the cytoplasm. The protein resides in the cytoskeleton. It is found in the apical cell membrane. The protein localises to the cell projection. It localises to the microvillus membrane. Its subcellular location is the microvillus. A head-to-tail association, of the N-terminal and C-terminal halves results in a closed conformation (inactive form) which is incapable of actin or membrane-binding. In terms of biological role, probably involved in connections of major cytoskeletal structures to the plasma membrane. Plays a role in regulating the proliferation, migration, and adhesion of human lymphoid cells and participates in immunologic synapse formation. The chain is Moesin from Sus scrofa (Pig).